The sequence spans 422 residues: UDP-N-acetylglucosamine 1-carboxyvinyltransferase (422 aa).

22–23 (KN) is a binding site for phosphoenolpyruvate. Arginine 92 lines the UDP-N-acetyl-alpha-D-glucosamine pocket. Cysteine 116 serves as the catalytic Proton donor. Residue cysteine 116 is modified to 2-(S-cysteinyl)pyruvic acid O-phosphothioketal. 2 residues coordinate UDP-N-acetyl-alpha-D-glucosamine: aspartate 306 and isoleucine 328.

It belongs to the EPSP synthase family. MurA subfamily.

Its subcellular location is the cytoplasm. The catalysed reaction is phosphoenolpyruvate + UDP-N-acetyl-alpha-D-glucosamine = UDP-N-acetyl-3-O-(1-carboxyvinyl)-alpha-D-glucosamine + phosphate. Its pathway is cell wall biogenesis; peptidoglycan biosynthesis. Cell wall formation. Adds enolpyruvyl to UDP-N-acetylglucosamine. The protein is UDP-N-acetylglucosamine 1-carboxyvinyltransferase of Elusimicrobium minutum (strain Pei191).